The primary structure comprises 485 residues: Glutamyl-tRNA(Gln) amidotransferase subunit A (485 aa).

Catalysis depends on charge relay system residues Lys-79 and Ser-154. Ser-178 functions as the Acyl-ester intermediate in the catalytic mechanism.

It belongs to the amidase family. GatA subfamily. Heterotrimer of A, B and C subunits.

It carries out the reaction L-glutamyl-tRNA(Gln) + L-glutamine + ATP + H2O = L-glutaminyl-tRNA(Gln) + L-glutamate + ADP + phosphate + H(+). Its function is as follows. Allows the formation of correctly charged Gln-tRNA(Gln) through the transamidation of misacylated Glu-tRNA(Gln) in organisms which lack glutaminyl-tRNA synthetase. The reaction takes place in the presence of glutamine and ATP through an activated gamma-phospho-Glu-tRNA(Gln). This is Glutamyl-tRNA(Gln) amidotransferase subunit A from Clostridium botulinum (strain Loch Maree / Type A3).